The chain runs to 97 residues: Large ribosomal subunit protein uL23 (97 aa).

The protein belongs to the universal ribosomal protein uL23 family. Part of the 50S ribosomal subunit. Contacts protein L29, and trigger factor when it is bound to the ribosome.

One of the early assembly proteins it binds 23S rRNA. One of the proteins that surrounds the polypeptide exit tunnel on the outside of the ribosome. Forms the main docking site for trigger factor binding to the ribosome. The polypeptide is Large ribosomal subunit protein uL23 (Sinorhizobium fredii (strain NBRC 101917 / NGR234)).